Here is an 876-residue protein sequence, read N- to C-terminus: Alanine--tRNA ligase (876 aa).

Residues H560, H564, C662, and H666 each contribute to the Zn(2+) site.

This sequence belongs to the class-II aminoacyl-tRNA synthetase family. It depends on Zn(2+) as a cofactor.

Its subcellular location is the cytoplasm. It carries out the reaction tRNA(Ala) + L-alanine + ATP = L-alanyl-tRNA(Ala) + AMP + diphosphate. In terms of biological role, catalyzes the attachment of alanine to tRNA(Ala) in a two-step reaction: alanine is first activated by ATP to form Ala-AMP and then transferred to the acceptor end of tRNA(Ala). Also edits incorrectly charged Ser-tRNA(Ala) and Gly-tRNA(Ala) via its editing domain. The polypeptide is Alanine--tRNA ligase (Synechococcus sp. (strain ATCC 27144 / PCC 6301 / SAUG 1402/1) (Anacystis nidulans)).